A 745-amino-acid polypeptide reads, in one-letter code: Eukaryotic translation initiation factor 3 subunit B (745 aa).

Residues 41-129 (DVIVIEGVPV…HRFSVHRFTD (89 aa)) form the RRM domain. WD repeat units follow at residues 189–230 (EHSR…RFMR), 251–293 (WSHE…RSFP), 303–344 (GQLK…LLEK), and 580–625 (GEHY…LQKH). Positions 644–745 (GKDEQKRVRK…IIEETEEVLA (102 aa)) form a coiled coil.

This sequence belongs to the eIF-3 subunit B family. As to quaternary structure, component of the eukaryotic translation initiation factor 3 (eIF-3) complex.

It localises to the cytoplasm. Its function is as follows. RNA-binding component of the eukaryotic translation initiation factor 3 (eIF-3) complex, which is involved in protein synthesis of a specialized repertoire of mRNAs and, together with other initiation factors, stimulates binding of mRNA and methionyl-tRNAi to the 40S ribosome. The eIF-3 complex specifically targets and initiates translation of a subset of mRNAs involved in cell proliferation. The polypeptide is Eukaryotic translation initiation factor 3 subunit B (Mycosarcoma maydis (Corn smut fungus)).